The sequence spans 866 residues: Protein SEY1 (866 aa).

Residues Met-1 to Gln-746 are Cytoplasmic-facing. One can recognise a GB1/RHD3-type G domain in the interval Gly-48 to Ala-305. A GTP-binding site is contributed by Gly-58–Ser-65. A coiled-coil region spans residues Ser-480–Arg-506. Residues Ile-747–Leu-767 form a helical membrane-spanning segment. At Arg-768–Pro-770 the chain is on the lumenal side. The helical transmembrane segment at Val-771–Leu-791 threads the bilayer. The Cytoplasmic segment spans residues Trp-792 to Trp-866. Positions Ser-840–Trp-866 are disordered. Positions Arg-854–Trp-866 are enriched in acidic residues.

Belongs to the TRAFAC class dynamin-like GTPase superfamily. GB1/RHD3 GTPase family. RHD3 subfamily.

It localises to the endoplasmic reticulum membrane. Cooperates with the reticulon proteins and tubule-shaping DP1 family proteins to generate and maintain the structure of the tubular endoplasmic reticulum network. Has GTPase activity, which is required for its function in ER organization. This chain is Protein SEY1, found in Coccidioides immitis (strain RS) (Valley fever fungus).